The chain runs to 163 residues: Allophycocyanin alpha-B chain (163 aa).

Residue Asn-71 is modified to N4-methylasparagine. Position 81 (Cys-81) interacts with (2R,3E)-phycocyanobilin.

The protein belongs to the phycobiliprotein family. In terms of assembly, heterodimer of an alpha and a beta chain. In terms of processing, contains one covalently linked bilin chromophore.

The protein resides in the cellular thylakoid membrane. Functionally, light-harvesting photosynthetic bile pigment-protein from the phycobiliprotein complex. Allophycocyanin has a maximum absorption at approximately 650 nanometers. This chain is Allophycocyanin alpha-B chain, found in Synechococcus sp. (strain ATCC 27144 / PCC 6301 / SAUG 1402/1) (Anacystis nidulans).